A 679-amino-acid polypeptide reads, in one-letter code: Stress-70 protein, mitochondrial (679 aa).

A mitochondrion-targeting transit peptide spans 1 to 46 (MISASRAAAARLVGTAASRSPAAARPQDGWNGLSHEAFRFVSRRDY). The tract at residues 1–432 (MISASRAAAA…IQGGVLAGDV (432 aa)) is interaction with NFS1. 2 residues coordinate ADP: threonine 63 and asparagine 64. A nucleotide-binding domain (NBD) region spans residues 63–431 (TNSCVAVMEG…AIQGGVLAGD (369 aa)). Lysine 76 is modified (N6-acetyllysine). Threonine 87 carries the phosphothreonine modification. N6-acetyllysine; alternate occurs at positions 135 and 138. An N6-succinyllysine; alternate mark is found at lysine 135 and lysine 138. At lysine 143 the chain carries N6-acetyllysine. Lysine 206 is modified (N6-acetyllysine; alternate). Lysine 206 is subject to N6-succinyllysine; alternate. The residue at position 206 (lysine 206) is an N6-malonyllysine; alternate. Lysine 234 and lysine 288 each carry N6-acetyllysine. At lysine 300 the chain carries N6-acetyllysine; alternate. Lysine 300 bears the N6-succinyllysine; alternate mark. Positions 313, 316, and 320 each coordinate ADP. Lysine 360 carries the N6-acetyllysine; alternate modification. An N6-succinyllysine; alternate modification is found at lysine 360. N6-succinyllysine is present on lysine 368. ADP-binding residues include glycine 388 and arginine 391. Residue lysine 394 is modified to N6-succinyllysine. A Phosphoserine modification is found at serine 408. Residues 432–441 (VTDVLLLDVT) form an interdomain linker region. Residues 432-679 (VTDVLLLDVT…QKEDQKEEKQ (248 aa)) are interaction with FXN and ISCU. The interval 442-679 (PLSLGIETLG…QKEDQKEEKQ (238 aa)) is substrate-binding domain (SBD). Omega-N-methylarginine is present on arginine 513. Lysine 567 and lysine 600 each carry N6-acetyllysine; alternate. An N6-succinyllysine; alternate mark is found at lysine 567 and lysine 600. Residue lysine 610 is modified to N6-succinyllysine. Residue lysine 612 is modified to N6-acetyllysine. At lysine 646 the chain carries N6-acetyllysine; alternate. Position 646 is an N6-succinyllysine; alternate (lysine 646). The tract at residues 656–679 (ASEREGSGSSGTGEQKEDQKEEKQ) is disordered. Positions 669–679 (EQKEDQKEEKQ) are enriched in basic and acidic residues.

It belongs to the heat shock protein 70 family. In terms of assembly, interacts strongly with the intermediate form of FXN and weakly with its mature form. Interacts with HSCB. Associates with the mitochondrial contact site and cristae organizing system (MICOS) complex, composed of at least MICOS10/MIC10, CHCHD3/MIC19, CHCHD6/MIC25, APOOL/MIC27, IMMT/MIC60, APOO/MIC23/MIC26 and QIL1/MIC13. This complex was also known under the names MINOS or MitOS complex. The MICOS complex associates with mitochondrial outer membrane proteins SAMM50, MTX1, MTX2 and DNAJC11, mitochondrial inner membrane protein TMEM11 and with HSPA9. Interacts with DNLZ, the interaction is required to prevent self-aggregation. Interacts with TESPA1. Interacts with PDPN. Interacts with NFU1, NFS1 and ISCU. Interacts with TP53; the interaction promotes TP53 degradation. Interacts (via SBD domain) with UBXN2A; the interaction with UBXN2A inhibits HSPA9/MOT-2 interaction with and degradation of TP53, thereby promotes TP53 translocation to the nucleus. Interacts with ITPR1 AND VDAC1; this interaction couples ITPR1 to VDAC1. Component of the TIM23 mitochondrial inner membrane pre-sequence translocase complex.

It is found in the mitochondrion. It localises to the nucleus. The protein resides in the nucleolus. Its subcellular location is the cytoplasm. The protein localises to the mitochondrion matrix. The enzyme catalyses ATP + H2O = ADP + phosphate + H(+). The chaperone activity is regulated by ATP-induced allosteric coupling of the nucleotide-binding (NBD) and substrate-binding (SBD) domains. ATP binding in the NBD leads to a conformational change in the NBD, which is transferred through the interdomain linker (IDL) to the substrate-binding domain (SBD). This elicits a reduced substrate affinity and a faster substrate exchange rate. Upon hydrolysis of ATP to ADP, the protein undergoes a conformational change that increases its affinity for substrate proteins. It cycles through repeated phases of ATP hydrolysis and nucleotide exchange, facilitating repeated cycles of substrate binding and release. Functions in collaboration with co-chaperones. Functions with the co-chaperone, DNLZ, to maintain solubility and regulate ATP hydrolysis. Nucleotide exchange factors, GRPEL1 and GRPEL2, accelerate nucleotide exchange. Mitochondrial chaperone that plays a key role in mitochondrial protein import, folding, and assembly. Plays an essential role in the protein quality control system, the correct folding of proteins, the re-folding of misfolded proteins, and the targeting of proteins for subsequent degradation. These processes are achieved through cycles of ATP binding, ATP hydrolysis, and ADP release, mediated by co-chaperones. In mitochondria, it associates with the TIM (translocase of the inner membrane) protein complex to assist in the import and folding of mitochondrial proteins. Plays an important role in mitochondrial iron-sulfur cluster (ISC) biogenesis. Interacts with and stabilizes ISC cluster assembly proteins FXN, NFU1, NFS1 and ISCU. Regulates erythropoiesis via stabilization of ISC assembly. Regulates mitochondrial calcium-dependent apoptosis by coupling two calcium channels, ITPR1 and VDAC1, at the mitochondria-associated endoplasmic reticulum (ER) membrane to facilitate calcium transport from the ER lumen to the mitochondria intermembrane space, providing calcium for the downstream calcium channel MCU, which releases it into the mitochondrial matrix. Although primarily located in the mitochondria, it is also found in other cellular compartments. In the cytosol, it associates with proteins involved in signaling, apoptosis, or senescence. It may play a role in cell cycle regulation via its interaction with and promotion of degradation of TP53. May play a role in the control of cell proliferation and cellular aging. Protects against reactive oxygen species (ROS). Extracellular HSPA9 plays a cytoprotective role by preventing cell lysis following immune attack by the membrane attack complex by disrupting formation of the complex. The polypeptide is Stress-70 protein, mitochondrial (Mus musculus (Mouse)).